Reading from the N-terminus, the 454-residue chain is N-acetyl-S-(2-succino)cysteine lyase (454 aa).

106-107 (TT) is a fumarate binding site. Residue His-154 is the Proton donor/acceptor of the active site. Arg-233 contacts fumarate. Residue Ser-277 is the Proton donor/acceptor of the active site. Fumarate is bound by residues Thr-278 and 283-285 (KRN).

Belongs to the lyase 1 family.

It catalyses the reaction N-acetyl-S-(2-succino)-L-cysteine = N-acetyl-L-cysteine + fumarate. It participates in amino-acid biosynthesis; L-cysteine biosynthesis. In terms of biological role, catalyzes the cleavage of N-acetyl-S-(2-succino)cysteine into fumarate and N-acetylcysteine. Is involved in a S-(2-succino)cysteine (2SC) degradation pathway that allows the bacterium to recover cysteine from 2SC and to detoxify 2SC that may be a toxic metabolite. Can also perform the reverse reaction in vitro, and has minor activity against 2SC and other small molecule thiols. This chain is N-acetyl-S-(2-succino)cysteine lyase, found in Dickeya dadantii (strain 3937) (Erwinia chrysanthemi (strain 3937)).